The following is a 595-amino-acid chain: O-phosphoseryl-tRNA(Sec) selenium transferase (595 aa).

Arg-75 contributes to the pyridoxal 5'-phosphate binding site. Residues 96–106 form a phosphate loop (P-loop) region; the sequence is GRSGDLFSEQP. Residues Arg-97, Ser-98, and Gln-105 each coordinate substrate. A compositionally biased stretch (polar residues) spans 174–187; sequence RTVTKDSTSATSAA. Disordered regions lie at residues 174–208 and 257–278; these read RTVT…TSLP and STNR…TPTS. Over residues 196 to 205 the composition is skewed to basic and acidic residues; sequence EADRDRHDRT. Position 358 (Arg-358) interacts with tRNA. Lys-371 is subject to N6-(pyridoxal phosphate)lysine. Arg-400 serves as a coordination point for substrate.

It belongs to the SepSecS family. Homotetramer composed of two homodimers. Requires pyridoxal 5'-phosphate as cofactor.

Its subcellular location is the cytoplasm. The catalysed reaction is O-phospho-L-seryl-tRNA(Sec) + selenophosphate + H2O = L-selenocysteinyl-tRNA(Sec) + 2 phosphate. It functions in the pathway aminoacyl-tRNA biosynthesis; selenocysteinyl-tRNA(Sec) biosynthesis; selenocysteinyl-tRNA(Sec) from L-seryl-tRNA(Sec) (archaeal/eukaryal route): step 2/2. Its function is as follows. Converts O-phosphoseryl-tRNA(Sec) to selenocysteinyl-tRNA(Sec) required for selenoprotein biosynthesis. The sequence is that of O-phosphoseryl-tRNA(Sec) selenium transferase from Leishmania donovani.